A 224-amino-acid polypeptide reads, in one-letter code: MLKSLVVLLLTSRVIAFPTLDTDQTAALHKPQATPNSQGTHGGFFYYWWSDGQSPAAYTNLDGGSYCLRWESGGNLIGGKGWSPGTDNRTIQISGTFQGVENSYLAVYGWLETPKVEYYIVEYHGVFNPAYDAQILGTVICDGSVYDISRSTRVSSGGTKILPRYWSVRRNKRTGGTVQTGCHFDAWRSTGLSAADHGFQIVATEGYFSSGFAEMTVADTSAEE.

The signal sequence occupies residues 1–16 (MLKSLVVLLLTSRVIA). Residues 32–218 (QATPNSQGTH…SSGFAEMTVA (187 aa)) form the GH11 domain. A glycan (N-linked (GlcNAc...) asparagine) is linked at Asn88. Residue Glu117 is the Nucleophile of the active site. The Proton donor role is filled by Glu205.

This sequence belongs to the glycosyl hydrolase 11 (cellulase G) family.

The catalysed reaction is Endohydrolysis of (1-&gt;4)-beta-D-xylosidic linkages in xylans.. It participates in glycan degradation; xylan degradation. In terms of biological role, endo-1,4-beta-xylanase involved in the hydrolysis of xylan, a major structural heterogeneous polysaccharide found in plant biomass representing the second most abundant polysaccharide in the biosphere, after cellulose. May act as an elicitor of plant defense responses in certain plants but does not exhibit any cell death when transiently expressed in N.benthamiana. The chain is Ethylene-inducing xylanase 5 from Verticillium dahliae (strain VdLs.17 / ATCC MYA-4575 / FGSC 10137) (Verticillium wilt).